Consider the following 1458-residue polypeptide: MLLSLLLLLLLGAPRRCTEGAAAALSPERVLKWQEKGIFIIQSESLKSCIQAGKSVLTLESCKQPNKNMLWKWVSNQHLFNIGGSGCLGLNLSNPEQPLGLYECDSTHVSLRWRCNRKMITGPLQHTVQVKQDNIIVASGKRLHKWISYMSDSGDICQHVHKDLYTRKGNAHGTPCMFPFQYNHQWHHECTREGRQDDSLWCATTSRYERDEKWGFCPDPTSAEVGCDAVWEKDLNSHICYQFNLLSSLSWSEAHSSCQMHGGALLSIVDEAEENFIRKQVSGEAVEVWTGLNQLDVNAGWQWSDGTPLSYLNWSPEISFEPFVEYHCGTFNSFMPRAWRSRNCESTLPYICKKYLNHVDDEIVEKDAWKYYATDCEPGWAPYHRNCYKLQKEEKTWNEALHSCLSSNSTLIDIGSLAEVEFLVTLLGNENASETWIGLSSNTFPVSFEWSNGSSVIFTNWHTLEPQIFPNRSQLCVSAEQSEGHWKVTDCEETHFYVCKKPGHVLSDAESGCQEGWERHGGFCYKIDTVLRSFDHASSGYYCPPALVTIADRFEQAFITSLISSVVNMKDSYFWIALQDQNDTGEYTWKTAGQKSEPVQYTHWNAHQPRSSGGCVAIRGRNPIGRWEVKDCVHFKAMSLCKQPVETREKMEHEERWPFHPCYLDWESQPGLASCFKVFHSEKVLMKRTWREAEAFCEEFGAHLASFAHIEEENFVNELLHPKFNRSEERQFWIGFNKRNPLNAGSWEWSDGTPVISSFLDNNYFGEDTRNCAVYKANKTLLPLHCGSKREWICKIPRDVRPKIPSWYQYDAPWLFHQDAEYLFYPHSSEWSSFEFVCGWLRSDILTIHSAHEQEFILSKIKALSKYGANWWIGLQEETANDELRWRDGTPVIYQNWDKERDRSMNNQSQRCAFISSITGLWDREECSVSMPSICKRKTFWVIEKEKDTPKQHGTCPKGWLYFDYKCLLVNVPKDPSNWKNWTQARDFCFDEGGTLVAIESEVEQAFITMNLFGQTTNVWIGLQNDDYEKWLNGNPVAYSNWSPSDIINIPSYNTTADQKPIPLCALLSSNPNFHFTGKWYFEDCGKEGYGFVCEKIQDSAGHEVNTSIMDPIPNTLEYGNRTYKIINANMTWYAAIKSCQLHGAELVSITDQYHQSFLTVILSRLGHAHWIGLFTADNGLHFDWSDGTKSSFTFWKDEDSSFLGDCVFADTSGRWHSTACESFLQGAICHVPTETRPFEHPELCSETSIPWIKFKSNCYSFSTVLHSASFEAAHEFCKKEGSNLLTIKDEAENSFLLEEPFAFGASVQMVWLNAQFDNETVKWLDGTPADQSNWGIRKPDMAHFEPHQCLALRIPEGVWQLSPCQKNMGFICKMKADIHTVKEHPGKGPSHSIVPLAVALTLVVILAIITLSFYIYKQNKGFFRRLAGVGNSYYPTTNFSTIHLEENILISDLEKND.

Residues 1–23 form the signal peptide; sequence MLLSLLLLLLLGAPRRCTEGAAA. Topologically, residues 24-1393 are extracellular; sequence ALSPERVLKW…EHPGKGPSHS (1370 aa). Cystine bridges form between cysteine 49-cysteine 62, cysteine 87-cysteine 104, cysteine 176-cysteine 202, cysteine 190-cysteine 217, cysteine 258-cysteine 352, cysteine 328-cysteine 344, cysteine 404-cysteine 499, cysteine 476-cysteine 491, cysteine 615-cysteine 632, cysteine 697-cysteine 794, cysteine 772-cysteine 786, cysteine 838-cysteine 935, cysteine 912-cysteine 927, cysteine 1065-cysteine 1085, cysteine 1207-cysteine 1221, cysteine 1278-cysteine 1373, and cysteine 1350-cysteine 1365. One can recognise a Ricin B-type lectin domain in the interval 49-113; that stretch reads CIQAGKSVLT…CDSTHVSLRW (65 aa). Asparagine 91 is a glycosylation site (N-linked (GlcNAc...) asparagine). Residues 171 to 219 form the Fibronectin type-II domain; sequence AHGTPCMFPFQYNHQWHHECTREGRQDDSLWCATTSRYERDEKWGFCPD. C-type lectin domains follow at residues 227-356, 374-502, 511-645, 660-798, 815-939, 954-1098, 1117-1231, and 1243-1376; these read CDAV…KKYL, TDCE…CKKP, SGCQ…KQPV, HPCY…KIPR, LFHQ…KRKT, GTCP…EKIQ, LEYG…AICH, and ELCS…CKMK. N-linked (GlcNAc...) asparagine glycans are attached at residues asparagine 408, asparagine 431, and asparagine 452. Residues 1394–1416 form a helical membrane-spanning segment; it reads IVPLAVALTLVVILAIITLSFYI. Residues 1417–1458 are Cytoplasmic-facing; the sequence is YKQNKGFFRRLAGVGNSYYPTTNFSTIHLEENILISDLEKND. An Endocytosis signal motif is present at residues 1432 to 1438; sequence NSYYPTT.

Interacts with sPLA2-IB/PLA2G1B; this interaction mediates intracellular signaling as well as clearance of extracellular sPLA2-IB/PLA2G1B via endocytotic pathway. Interacts with sPLA2-X/PLA2G10; this interaction mediates sPLA2-X/PLA2G10 clearance and inactivation. In terms of processing, the secretory phospholipase A2 receptor form may be produced by the action of metalloproteinases. It contains all extracellular domains and only lacks transmembrane and cytosolic regions. It is however unclear whether this form is produced by proteolytic cleavage as suggested by some experiments, or by alternative splicing. Lung, skeletal muscle, brain, kidney and heart.

The protein resides in the cell membrane. It is found in the secreted. Functionally, receptor for secretory phospholipase A2 (sPLA2). Also able to bind to snake PA2-like toxins. Although its precise function remains unclear, binding of sPLA2 to its receptor participates in both positive and negative regulation of sPLA2 functions as well as clearance of sPLA2. Binding of sPLA2-IB/PLA2G1B induces various effects depending on the cell type, such as activation of the mitogen-activated protein kinase (MAPK) cascade to induce cell proliferation, the production of lipid mediators, selective release of arachidonic acid in bone marrow-derived mast cells. In neutrophils, binding of sPLA2-IB/PLA2G1B can activate p38 MAPK to stimulate elastase release and cell adhesion. May be involved in responses in pro-inflammatory cytokine productions during endotoxic shock. Also has endocytic properties and rapidly internalizes sPLA2 ligands, which is particularly important for the clearance of extracellular sPLA2s to protect their potent enzymatic activities. The soluble secretory phospholipase A2 receptor form is circulating and acts as a negative regulator of sPLA2 functions by blocking the biological functions of sPLA2-IB/PLA2G1B and sPLA2-X/PLA2G10. The polypeptide is Secretory phospholipase A2 receptor (PLA2R1) (Oryctolagus cuniculus (Rabbit)).